We begin with the raw amino-acid sequence, 49 residues long: Large ribosomal subunit protein bL33B (49 aa).

Belongs to the bacterial ribosomal protein bL33 family.

The polypeptide is Large ribosomal subunit protein bL33B (Staphylococcus saprophyticus subsp. saprophyticus (strain ATCC 15305 / DSM 20229 / NCIMB 8711 / NCTC 7292 / S-41)).